The sequence spans 199 residues: dITP/XTP pyrophosphatase (199 aa).

8 to 13 lines the substrate pocket; sequence SGNAGK. D69 serves as the catalytic Proton acceptor. D69 lines the Mg(2+) pocket. Residues S70, 154–157, K177, and 182–183 contribute to the substrate site; these read FGYN and HR.

It belongs to the HAM1 NTPase family. As to quaternary structure, homodimer. Requires Mg(2+) as cofactor.

The enzyme catalyses XTP + H2O = XMP + diphosphate + H(+). The catalysed reaction is dITP + H2O = dIMP + diphosphate + H(+). It carries out the reaction ITP + H2O = IMP + diphosphate + H(+). In terms of biological role, pyrophosphatase that catalyzes the hydrolysis of nucleoside triphosphates to their monophosphate derivatives, with a high preference for the non-canonical purine nucleotides XTP (xanthosine triphosphate), dITP (deoxyinosine triphosphate) and ITP. Seems to function as a house-cleaning enzyme that removes non-canonical purine nucleotides from the nucleotide pool, thus preventing their incorporation into DNA/RNA and avoiding chromosomal lesions. This Xanthomonas campestris pv. campestris (strain 8004) protein is dITP/XTP pyrophosphatase.